The sequence spans 118 residues: Small ribosomal subunit protein uS13 (118 aa).

The interval 92–118 (RRGHPLRGQRTRTNARTRKGPRKAIRK) is disordered.

Belongs to the universal ribosomal protein uS13 family. Part of the 30S ribosomal subunit. Forms a loose heterodimer with protein S19. Forms two bridges to the 50S subunit in the 70S ribosome.

In terms of biological role, located at the top of the head of the 30S subunit, it contacts several helices of the 16S rRNA. In the 70S ribosome it contacts the 23S rRNA (bridge B1a) and protein L5 of the 50S subunit (bridge B1b), connecting the 2 subunits; these bridges are implicated in subunit movement. Contacts the tRNAs in the A and P-sites. This chain is Small ribosomal subunit protein uS13, found in Xanthomonas campestris pv. campestris (strain ATCC 33913 / DSM 3586 / NCPPB 528 / LMG 568 / P 25).